Reading from the N-terminus, the 545-residue chain is Sphingosine-1-phosphate lyase (545 aa).

The Lumenal portion of the chain corresponds to 1 to 26 (MRPFSGSDCLKPVTEGINRAFGAKEP). A helical; Signal-anchor for type III membrane protein transmembrane segment spans residues 27–47 (WQVATITATTVLGGVWLWTVI). Over 48–545 (CQDENLYIRG…HSMYYTPSQK (498 aa)) the chain is Cytoplasmic. N6-(pyridoxal phosphate)lysine is present on K342.

It belongs to the group II decarboxylase family. Sphingosine-1-phosphate lyase subfamily. Pyridoxal 5'-phosphate is required as a cofactor. In terms of tissue distribution, localized to the developing gut primordium during embryogenesis.

It localises to the endoplasmic reticulum membrane. The catalysed reaction is sphinganine 1-phosphate = hexadecanal + phosphoethanolamine. It participates in lipid metabolism; sphingolipid metabolism. Cleaves phosphorylated sphingoid bases (PSBs), such as sphingosine-1-phosphate, into fatty aldehydes and phosphoethanolamine. Sphingolipid catabolism is required for normal development including viability, reproduction and muscle development. This Drosophila melanogaster (Fruit fly) protein is Sphingosine-1-phosphate lyase.